The primary structure comprises 188 residues: MYERYAGLIFDMDGTILDTEPTHRKAWREVLGHYGLQYDIQAMIALNGSPTWRIAQAIIELNQADLDPHALAREKTEAVRSMLLDSVEPLPLVDVVKSWHGRRPMAVGTGSESAIAEALLAHLGLRHYFDAVVAADHVKHHKPAPDTFLLCAQRMGVQPTQCVVFEDADFGIQAARAAGMDAVDVRLL.

Aspartate 11 (nucleophile) is an active-site residue. 3 residues coordinate Mg(2+): aspartate 11, aspartate 13, and aspartate 167. Residue 11-13 (DMD) participates in substrate binding.

This sequence belongs to the HAD-like hydrolase superfamily. CbbY/CbbZ/Gph/YieH family. Requires Mg(2+) as cofactor. Mn(2+) is required as a cofactor. It depends on Co(2+) as a cofactor. The cofactor is Zn(2+).

Functionally, catalyzes strongly the dephosphorylation of fructose-1-phosphate (Fru1P) and slightly the dephosphorylation of 6-phosphogluconate (6P-Glu). It has low beta-phosphoglucomutase activity. The chain is Fructose-1-phosphate phosphatase YqaB (yqaB) from Escherichia coli (strain K12).